Reading from the N-terminus, the 220-residue chain is Small ribosomal subunit protein uS2 (220 aa).

It belongs to the universal ribosomal protein uS2 family.

This Methanococcus maripaludis (strain DSM 14266 / JCM 13030 / NBRC 101832 / S2 / LL) protein is Small ribosomal subunit protein uS2.